Reading from the N-terminus, the 353-residue chain is Protein RecA (353 aa).

80–87 (GPESSGKT) is an ATP binding site.

Belongs to the RecA family.

Its subcellular location is the cytoplasm. Functionally, can catalyze the hydrolysis of ATP in the presence of single-stranded DNA, the ATP-dependent uptake of single-stranded DNA by duplex DNA, and the ATP-dependent hybridization of homologous single-stranded DNAs. It interacts with LexA causing its activation and leading to its autocatalytic cleavage. The protein is Protein RecA of Chlorobium chlorochromatii (strain CaD3).